Consider the following 1927-residue polypeptide: Immunoglobulin A1 protease (1927 aa).

The first 42 residues, 1 to 42 (MEKYFGEKQERFSFRKLSVGLVSATISSLFFMSVLASSSVDA), serve as a signal peptide directing secretion. The propeptide occupies 43–99 (QETAGVHYKYVADSELSSEEKKQLVYDIPTYVENDDETYYLVYKLNSQNQLAELPNT). Residues 96 to 100 (LPNTG) carry the LPXTG sorting signal motif. A Pentaglycyl murein peptidoglycan amidated threonine modification is found at threonine 99. 2 helical membrane passes run 106-125 (QALV…FAVS) and 132-154 (KTVL…VHAL). Over 155–1927 (ENHLLLNYNT…FRRSIFENKK (1773 aa)) the chain is Extracellular. Residues 235–246 (QEQTPVSSTKPT) are compositionally biased toward polar residues. 3 disordered regions span residues 235 to 305 (QEQT…NPQD), 371 to 394 (SREI…TKKT), and 426 to 640 (EAVV…PEKT). The segment covering 276-296 (LAEHKNLETKKEEKISPKEKT) has biased composition (basic and acidic residues). The G5 domain maps to 314–393 (KPELLYREET…PRIVEKGTKK (80 aa)). A run of 3 repeats spans residues 419–435 (AIQP…KGEP), 436–452 (EVQP…KGEP), and 453–469 (AVQP…KGEP). The 3 X 17 AA approximate tandem repeats stretch occupies residues 419–469 (AIQPELPEAVVSDKGEPEVQPTLPEAVVTDKGEPAVQPELPEAVVSDKGEP). Basic and acidic residues predominate over residues 485–511 (VKPETPVEKTKEQGPEKTEEVPVKPTE). Polar residues-rich tracts occupy residues 516-529 (NPNE…SIQG), 538-559 (EDTQ…SNKP), and 568-606 (ESNQ…STED). The segment covering 609–619 (TKSNTSNSNGN) has biased composition (low complexity). Basic and acidic residues predominate over residues 620–640 (EEIKQENELDPDKKVEDPEKT). Histidine 1565 contributes to the Zn(2+) binding site. Glutamate 1566 is a catalytic residue. Zn(2+)-binding residues include histidine 1569 and glutamate 1589.

It belongs to the peptidase M26 family. Zn(2+) is required as a cofactor. The Gram-positive cell-wall anchor motif LPXTG is located in the N-terminal part, in contrast to such motifs in other known streptococcal and staphylococcal proteins. The protease could be cleaved by the sortase and anchored in the membrane via the two potential N-terminal transmembrane domains, whereas the propeptide located prior to the LPXTG motif would remain attached to the cell wall peptidoglycan by an amide bond.

It localises to the secreted. The protein localises to the cell wall. Its subcellular location is the membrane. It carries out the reaction Cleavage of Pro-|-Thr bond in the hinge region of the heavy chain of human IgA.. Zinc metalloproteinase which cleaves human immunoglobulin A1 (IgA1) in the hinge region, rendering it less efficient in coating the surface of colonizing or invading pneumococci. May be responsible for pneumococcal infection and is potentially involved in distinct stages of pneumococcal disease. In Streptococcus pneumoniae, this protein is Immunoglobulin A1 protease (iga).